The chain runs to 90 residues: Small ribosomal subunit protein uS15c (90 aa).

Belongs to the universal ribosomal protein uS15 family. Part of the 30S ribosomal subunit.

It localises to the plastid. It is found in the chloroplast. The sequence is that of Small ribosomal subunit protein uS15c (rps15-A) from Hordeum vulgare (Barley).